The following is a 430-amino-acid chain: Probable sugar isomerase R00627 (430 aa).

Residues His-257, Asp-289, and Asp-291 each coordinate Mn(2+).

This sequence belongs to the rhamnose isomerase family. Mn(2+) serves as cofactor.

This is Probable sugar isomerase R00627 from Rhizobium meliloti (strain 1021) (Ensifer meliloti).